Reading from the N-terminus, the 304-residue chain is Mas-related G-protein coupled receptor member A (304 aa).

The Extracellular segment spans residues 1–17 (MDKTIPGSFNSRTLIPN). The chain crosses the membrane as a helical span at residues 18–38 (LLIIISGLVGLIGNAMVFWLL). The Cytoplasmic portion of the chain corresponds to 39–46 (GFRLARNA). The helical transmembrane segment at 47–67 (FSVYILNLALADFLFLLCHII) threads the bilayer. Residues 68–80 (DSTLLLLKFSYPN) are Extracellular-facing. Residues 81–101 (IIFLPCFNTVMMVPYIAGLSM) traverse the membrane as a helical segment. Topologically, residues 102-132 (LSAISTERCLSVVCPIWYRCRRPKHTSTVMC) are cytoplasmic. Residues 133–153 (SAIWVLSLLICILNRYFCGFL) form a helical membrane-spanning segment. Over 154–167 (DTKYEKDNRCLASN) the chain is Extracellular. A helical membrane pass occupies residues 168 to 188 (FFTAACLIFLFVVLCLSSLAL). Residues 189–211 (LVRLFCGAGRMKLTRLYATIMLT) are Cytoplasmic-facing. A helical transmembrane segment spans residues 212–232 (VLVFLLCGLPFGIHWFLLIWI). Residues 233–244 (KIDYGKFAYGLY) lie on the Extracellular side of the membrane. Residues 245–265 (LAALVLTAVNSCANPIIYFFV) form a helical membrane-spanning segment. At 266-304 (GSFRHQKHQTLKMVLQRALQDTPETAENTVEMSSSKVEP) the chain is on the cytoplasmic side.

Belongs to the G-protein coupled receptor 1 family. Mas subfamily. Expressed in a subset of IB4-positive small diameter nociceptive dorsal root neurons.

The protein localises to the cell membrane. In terms of biological role, orphan receptor activated by a subset of RFamide-family neuropeptides such as FLRF-amide and FMRF-amide. Mediates its action by association with G proteins that activate a phosphatidylinositol-calcium second messenger system. Its effect is mediated by G(q) and G(11) proteins. May regulate the function of nociceptive neurons by modulation of pain perception. This chain is Mas-related G-protein coupled receptor member A (Mrgpra), found in Rattus norvegicus (Rat).